The sequence spans 188 residues: uncharacterized protein (188 aa).

The signal sequence occupies residues 1–18; it reads MTLRIIAHLLALTASLAG. Residue C19 is the site of N-palmitoyl cysteine attachment. The S-diacylglycerol cysteine moiety is linked to residue C19.

Its subcellular location is the cell membrane. This is an uncharacterized protein from Sinorhizobium fredii (strain NBRC 101917 / NGR234).